The primary structure comprises 508 residues: Methionine--tRNA ligase (508 aa).

The 'HIGH' region motif lies at 12-22; sequence YYVNDVAHIGH. The 'KMSKS' region signature appears at 295–299; the sequence is KISKS. An ATP-binding site is contributed by K298.

This sequence belongs to the class-I aminoacyl-tRNA synthetase family. MetG type 2B subfamily. Monomer.

The protein resides in the cytoplasm. It carries out the reaction tRNA(Met) + L-methionine + ATP = L-methionyl-tRNA(Met) + AMP + diphosphate. Functionally, is required not only for elongation of protein synthesis but also for the initiation of all mRNA translation through initiator tRNA(fMet) aminoacylation. This Rickettsia prowazekii (strain Madrid E) protein is Methionine--tRNA ligase (metG).